A 342-amino-acid chain; its full sequence is UDP-3-O-acylglucosamine N-acyltransferase (342 aa).

The active-site Proton acceptor is the His-253.

This sequence belongs to the transferase hexapeptide repeat family. LpxD subfamily. As to quaternary structure, homotrimer.

It carries out the reaction a UDP-3-O-[(3R)-3-hydroxyacyl]-alpha-D-glucosamine + a (3R)-hydroxyacyl-[ACP] = a UDP-2-N,3-O-bis[(3R)-3-hydroxyacyl]-alpha-D-glucosamine + holo-[ACP] + H(+). It participates in bacterial outer membrane biogenesis; LPS lipid A biosynthesis. Functionally, catalyzes the N-acylation of UDP-3-O-acylglucosamine using 3-hydroxyacyl-ACP as the acyl donor. Is involved in the biosynthesis of lipid A, a phosphorylated glycolipid that anchors the lipopolysaccharide to the outer membrane of the cell. This Rickettsia canadensis (strain McKiel) protein is UDP-3-O-acylglucosamine N-acyltransferase.